Here is an 842-residue protein sequence, read N- to C-terminus: Translation initiation factor IF-2 (842 aa).

Residues 94–259 (QRSPEEIQAE…HGFQNPTGPV (166 aa)) form a disordered region. Residues 96 to 138 (SPEEIQAEQKRELDERRAAENAARDKVEAEVRQRNEEQARRQA) show a composition bias toward basic and acidic residues. Residues 139–148 (ADSAVAAPAP) show a composition bias toward low complexity. Pro residues predominate over residues 149 to 159 (AAKPEPAPAAA). Residues 160–172 (PAPVVADAPASED) are compositionally biased toward low complexity. Basic and acidic residues-rich tracts occupy residues 173–202 (AAARAAERKKDETRRNESRTRDDDRRRGEA) and 226–235 (TTDEESDGAR). Positions 236 to 249 (RGRGGKGKLKKRNQ) are enriched in basic residues. Positions 342-509 (SRAPVVTVMG…AVLLQAEILE (168 aa)) constitute a tr-type G domain. Residues 351–358 (GHVDHGKT) are G1. 351–358 (GHVDHGKT) serves as a coordination point for GTP. The segment at 376–380 (GITQH) is G2. The G3 stretch occupies residues 397–400 (DTPG). GTP contacts are provided by residues 397 to 401 (DTPGH) and 451 to 454 (NKID). Positions 451 to 454 (NKID) are G4. Residues 487–489 (SAK) form a G5 region.

It belongs to the TRAFAC class translation factor GTPase superfamily. Classic translation factor GTPase family. IF-2 subfamily.

Its subcellular location is the cytoplasm. Its function is as follows. One of the essential components for the initiation of protein synthesis. Protects formylmethionyl-tRNA from spontaneous hydrolysis and promotes its binding to the 30S ribosomal subunits. Also involved in the hydrolysis of GTP during the formation of the 70S ribosomal complex. The chain is Translation initiation factor IF-2 from Pseudomonas putida (strain GB-1).